The chain runs to 365 residues: Histidinol-phosphate aminotransferase 2 (365 aa).

Lys221 carries the post-translational modification N6-(pyridoxal phosphate)lysine.

It belongs to the class-II pyridoxal-phosphate-dependent aminotransferase family. Histidinol-phosphate aminotransferase subfamily. Homodimer. The cofactor is pyridoxal 5'-phosphate.

It carries out the reaction L-histidinol phosphate + 2-oxoglutarate = 3-(imidazol-4-yl)-2-oxopropyl phosphate + L-glutamate. Its pathway is amino-acid biosynthesis; L-histidine biosynthesis; L-histidine from 5-phospho-alpha-D-ribose 1-diphosphate: step 7/9. The polypeptide is Histidinol-phosphate aminotransferase 2 (hisC2) (Bradyrhizobium diazoefficiens (strain JCM 10833 / BCRC 13528 / IAM 13628 / NBRC 14792 / USDA 110)).